The sequence spans 204 residues: FMN-dependent NADH:quinone oxidoreductase (204 aa).

FMN-binding positions include Ser-10 and 16–18; that span reads SKS.

The protein belongs to the azoreductase type 1 family. As to quaternary structure, homodimer. FMN is required as a cofactor.

The enzyme catalyses 2 a quinone + NADH + H(+) = 2 a 1,4-benzosemiquinone + NAD(+). It catalyses the reaction N,N-dimethyl-1,4-phenylenediamine + anthranilate + 2 NAD(+) = 2-(4-dimethylaminophenyl)diazenylbenzoate + 2 NADH + 2 H(+). In terms of biological role, quinone reductase that provides resistance to thiol-specific stress caused by electrophilic quinones. Functionally, also exhibits azoreductase activity. Catalyzes the reductive cleavage of the azo bond in aromatic azo compounds to the corresponding amines. The polypeptide is FMN-dependent NADH:quinone oxidoreductase (Ruegeria pomeroyi (strain ATCC 700808 / DSM 15171 / DSS-3) (Silicibacter pomeroyi)).